The sequence spans 155 residues: SsrA-binding protein (155 aa).

This sequence belongs to the SmpB family.

It is found in the cytoplasm. Its function is as follows. Required for rescue of stalled ribosomes mediated by trans-translation. Binds to transfer-messenger RNA (tmRNA), required for stable association of tmRNA with ribosomes. tmRNA and SmpB together mimic tRNA shape, replacing the anticodon stem-loop with SmpB. tmRNA is encoded by the ssrA gene; the 2 termini fold to resemble tRNA(Ala) and it encodes a 'tag peptide', a short internal open reading frame. During trans-translation Ala-aminoacylated tmRNA acts like a tRNA, entering the A-site of stalled ribosomes, displacing the stalled mRNA. The ribosome then switches to translate the ORF on the tmRNA; the nascent peptide is terminated with the 'tag peptide' encoded by the tmRNA and targeted for degradation. The ribosome is freed to recommence translation, which seems to be the essential function of trans-translation. The sequence is that of SsrA-binding protein from Streptococcus equi subsp. equi (strain 4047).